Reading from the N-terminus, the 426-residue chain is COMPASS component SWD1 (426 aa).

WD repeat units lie at residues 24–63 (ENPL…PICV), 70–109 (AHVR…KPLK), 212–251 (ITSS…ENSA), 264–307 (INKL…LVRV), and 310–350 (GAEE…KWSA). Arg236 and Lys266 together coordinate DNA.

As to quaternary structure, component of the Set1C/COMPASS complex which consists of SET1(2), BRE2(2), SPP1(2), SDC1(1), SHG1(1), SWD1(1), SWD2(1), and SWD3(1).

Its subcellular location is the nucleus. The protein localises to the chromosome. The protein resides in the telomere. Functionally, component of the Set1C/COMPASS complex that specifically mono-, di- and trimethylates histone H3 to form H3K4me1/2/3, which subsequently plays a role in telomere length maintenance and transcription elongation regulation. COMPASS recognizes ubiquitinated H2B on one face of the nucleosome which stimulates the methylation of H3 on the opposing face. SWD1/CPS50 acts as an assembly and regulatory hub for COMPASS complex formation. Serves as a highly utilized surface for COMPASS interaction with the nucleosome. This is COMPASS component SWD1 from Saccharomyces cerevisiae (strain ATCC 204508 / S288c) (Baker's yeast).